Consider the following 528-residue polypeptide: Importin subunit alpha-2 (528 aa).

A compositionally biased stretch (low complexity) spans 1 to 15; that stretch reads MADDSASPSPSSASP. A disordered region spans residues 1-36; sequence MADDSASPSPSSASPLQHHREALKSSVRNTAASRRR. 8 ARM repeats span residues 125–165, 167–206, 209–248, 253–292, 294–335, 338–383, 386–425, and 438–477; these read VPLV…NIAA, EPEE…NVAG, AELR…NLIK, KAAN…YLSA, SDRG…NLIA, DYMV…NIAA, FEHK…NLCV, and VEHL…LVMR.

It belongs to the importin alpha family. In terms of assembly, forms a complex with importin subunit beta-1. The whole complex, most stable and composed of importin alpha, importin beta and NLS substrate, is referred to as PTAC or pore targeting complex. In terms of tissue distribution, expressed in root, callus, and etiolated leaf. Low expression in green leaf.

It localises to the cytoplasm. The protein resides in the perinuclear region. Binds specifically and directly to substrates containing either a simple or bipartite NLS motif. Promotes docking of import substrates to the nuclear envelope. This Oryza sativa subsp. japonica (Rice) protein is Importin subunit alpha-2.